Reading from the N-terminus, the 454-residue chain is V-type ATP synthase subunit I 2 (454 aa).

A disordered region spans residues 101–121 (EREGDAPSVPRGKSSVAHDSA). Helical transmembrane passes span 254 to 274 (LLFG…VLGL), 293 to 313 (VFLS…EFFA), 351 to 371 (MAFF…GLII), and 424 to 444 (ACLS…SVCV).

It belongs to the V-ATPase 116 kDa subunit family.

The protein resides in the cell membrane. Produces ATP from ADP in the presence of a proton gradient across the membrane. This chain is V-type ATP synthase subunit I 2 (atpI2), found in Treponema pallidum (strain Nichols).